The chain runs to 862 residues: DNA topoisomerase 3-beta-1 (862 aa).

Residues 3–153 enclose the Toprim domain; the sequence is TVLMVAEKPS…EKTVFRARFS (151 aa). One can recognise a Topo IA-type catalytic domain in the interval 171–593; the sequence is DHNEALSVDA…HTLDVFKRKF (423 aa). Catalysis depends on Tyr-336, which acts as the O-(5'-phospho-DNA)-tyrosine intermediate. The segment covering 821-851 has biased composition (basic residues); the sequence is PMHRGGPGRRQGRGRGRARRPPGKPNPRRPK. A disordered region spans residues 821–854; sequence PMHRGGPGRRQGRGRGRARRPPGKPNPRRPKDKM.

Belongs to the type IA topoisomerase family. Isoform 1 is found in testis, heart and skeletal muscle. A 4 kb transcript which probably represents isoform 2 is found in thymus, kidney and pancreas.

It catalyses the reaction ATP-independent breakage of single-stranded DNA, followed by passage and rejoining.. In terms of biological role, releases the supercoiling and torsional tension of DNA introduced during the DNA replication and transcription by transiently cleaving and rejoining one strand of the DNA duplex. Introduces a single-strand break via transesterification at a target site in duplex DNA. The scissile phosphodiester is attacked by the catalytic tyrosine of the enzyme, resulting in the formation of a DNA-(5'-phosphotyrosyl)-enzyme intermediate and the expulsion of a 3'-OH DNA strand. The free DNA strand than undergoes passage around the unbroken strand thus removing DNA supercoils. Finally, in the religation step, the DNA 3'-OH attacks the covalent intermediate to expel the active-site tyrosine and restore the DNA phosphodiester backbone. Possesses negatively supercoiled DNA relaxing activity. The protein is DNA topoisomerase 3-beta-1 (TOP3B) of Homo sapiens (Human).